The sequence spans 1845 residues: Proteasome adapter and scaffold protein ECM29 (1845 aa).

The residue at position 2 (Ala-2) is an N-acetylalanine. 27 HEAT repeats span residues 28–65 (TDEQLQNIISKFLPPVLLKLSSTQEGVRKKVMELLVHL), 107–144 (YPRLPVEKQCELAPTLLTAMEGKPQPQQDSLMHLLIPT), 162–205 (NLAE…QGSS), 326–362 (RDPVSTRVKLKIVPHLLRSRQAAETFPANIQVVYDGL), 387–426 (PEIKIKPLGPMLLNGLTKLINEYKEDPKLLSMAYSAVGKL), 429–466 (RMPHLFTKDIALVQQLFEALCKEEPETRLAIQEALSMM), 469–507 (AYSTLEGAQRTLMEALVASYLIKPEVQVRQVAVKFASTV), 683–720 (YPEKLATKFVDKTEWIKSLMNNSKEEMRELAALFYSVV), 721–759 (VSTVSGNELKSMIEQLIKTTKDNHSPEIQHGSLLALGFT), 783–820 (TLPDQEELIQSATETIGSFLDSTSPLLAIAACTALGEI), 829–868 (PSEGSGFTKLHLVESLLSRIPSSKETNKMKERAIQTLGYF), 870–907 (VGDGDFPHQKLLLQGLMDSVEAKQIELQFTIGEAITSA), 931–969 (AGAKVNDVVPWVLDVILNKHIISPNPHVRQAACIWLLSL), 975–1012 (THKEVKSHLKEIQSAFVSVLSENDELSQDVASKGLGLV), 1013–1050 (YELGNEQDQQELVSTLVETLMTGKRVKHEVSGETVVFQ), 1112–1149 (AGEQLAPFLPQLVPRLYRYQFDPNLGIRQAMTSIWNAL), 1152–1189 (DKSMVDKYLKEILQDLVKNLTSNMWRVRESSCLALNDL), 1194–1231 (PLDDIIDKLPEIWETLFRVQDDIKESVRKAAELALKTL), 1243–1281 (KGAAGQRTIAALLPCLLDKGMMSTVTEVRALSINTLVKI), 1285–1323 (AGAMLKPHAPKLIPALLESLSVLEPQVLNYLSLRATEQE), 1348–1386 (LQYLDVSVLGELVPRLCELIRSGVGLGTKGGCASVIVSL), 1390–1427 (CPQDLTPYSGKLMSALLSGLTDRNSVIQKSCAFAMGHL), 1517–1554 (SFGGIRLYLQELITITQKALQSQSWKMKAQGAIAMASI), 1558–1595 (TSSLVPPYLGMILTALLQGLAGRTWAGKEELLKAIACV), 1605–1642 (KSVPNQPSTNEILQAVLKECSKENVKYKIVAISCAADI), 1646–1683 (TKEDRFQEFSNIVIPLIKKNSLESSGVRTTKNEEENEK), and 1779–1822 (TYSS…LATM). The segment covering 193–207 (QSRQNSSSAQGSSSN) has biased composition (low complexity). The disordered stretch occupies residues 193-217 (QSRQNSSSAQGSSSNSGGGSGIPQP). Ser-830 carries the post-translational modification Phosphoserine. Position 836 is a phosphothreonine (Thr-836). A Glycyl lysine isopeptide (Lys-Gly) (interchain with G-Cter in SUMO1) cross-link involves residue Lys-1039.

It belongs to the ECM29 family. As to quaternary structure, non-stoichiometric component of the proteasome; associates with the 26S proteasome. Interacts (via N-terminus) with VPS11, VPS26A, VPS36, RAB11FIP4 and RABEP1. Interacts (via C-terminus) with DCTN1, DCTN2, KIF5B, MYH7, MYH10, MYO10 and ARF6.

The protein localises to the endoplasmic reticulum. It localises to the endoplasmic reticulum-Golgi intermediate compartment. It is found in the endosome. Its subcellular location is the cytoplasm. The protein resides in the cytoskeleton. The protein localises to the microtubule organizing center. It localises to the centrosome. It is found in the nucleus. Its subcellular location is the multivesicular body. The protein resides in the cytoplasmic vesicle. In terms of biological role, adapter/scaffolding protein that binds to the 26S proteasome, motor proteins and other compartment specific proteins. May couple the proteasome to different compartments including endosome, endoplasmic reticulum and centrosome. May play a role in ERAD and other enhanced proteolysis. Promotes proteasome dissociation under oxidative stress. The protein is Proteasome adapter and scaffold protein ECM29 of Homo sapiens (Human).